A 192-amino-acid chain; its full sequence is Phosphoheptose isomerase (192 aa).

In terms of domain architecture, SIS spans 34–192; that stretch reads VVDAYKAGNK…VERELFVKGK (159 aa). 49–51 contributes to the substrate binding site; sequence NGG. The Zn(2+) site is built by His58 and Glu62. Substrate contacts are provided by residues Glu62, 91–92, 117–119, Ser122, and Gln169; these read ND and STS. Zn(2+)-binding residues include Gln169 and His177.

This sequence belongs to the SIS family. GmhA subfamily. As to quaternary structure, homotetramer. Requires Zn(2+) as cofactor.

Its subcellular location is the cytoplasm. It catalyses the reaction 2 D-sedoheptulose 7-phosphate = D-glycero-alpha-D-manno-heptose 7-phosphate + D-glycero-beta-D-manno-heptose 7-phosphate. It participates in carbohydrate biosynthesis; D-glycero-D-manno-heptose 7-phosphate biosynthesis; D-glycero-alpha-D-manno-heptose 7-phosphate and D-glycero-beta-D-manno-heptose 7-phosphate from sedoheptulose 7-phosphate: step 1/1. Catalyzes the isomerization of sedoheptulose 7-phosphate in D-glycero-D-manno-heptose 7-phosphate. The protein is Phosphoheptose isomerase of Citrifermentans bemidjiense (strain ATCC BAA-1014 / DSM 16622 / JCM 12645 / Bem) (Geobacter bemidjiensis).